Consider the following 423-residue polypeptide: Site-specific recombinase Flp (423 aa).

A Tyr recombinase Flp-type domain is found at 136 to 422; it reads GNSHSKKMLK…DYLSSYINRR (287 aa). The active-site O-(3'-phospho-DNA)-tyrosine intermediate is the Tyr343.

The protein belongs to the 'phage' integrase family. As to quaternary structure, homotetramer.

Functionally, part of the plasmid amplification system, which corrects any decrease in copy number caused by a rare missegregation event. Catalyzes the recombination between the large inverted repetitions of the 2-micron plasmid during plasmid replication. This recombination event changes the direction of one of the two replication forks in the bidirectionally replicating molecule, effectively resulting in multiple rounds of replication from a single initiation event. Binds specifically to the FLP recognition target (FRT) site where it induces DNA to bend. Three types of bend exist. Type I is approximately 60 degrees and results from 1 FLP molecule binding to 1 symmetry element. Type II is &gt;144 degrees and results from FLP molecules binding to symmetry elements a and b. Type III is approximately 65 degrees and results from FLP molecules binding to symmetry elements b and c. The chain is Site-specific recombinase Flp (FLP1) from Saccharomyces cerevisiae (strain ATCC 204508 / S288c) (Baker's yeast).